Reading from the N-terminus, the 359-residue chain is MMP endo-(1,4)-3-O-methyl-alpha-D-mannosidase (359 aa).

In terms of assembly, monomer in solution.

It catalyses the reaction Endohydrolysis of 3-O-methyl-alpha-D-mannosyl-(1-&gt;4)-3-O-methyl-D-mannose linkages within (1,4)-3-O-methyl-alpha-D-mannnan substrates.. Hydrolase involved in the biosynthesis of 3-O-methylmannose polysaccharides (MMP), which are intracellular polymethylated polysaccharides implicated in the modulation of fatty acid metabolism in non-tuberculous mycobacteria. Highly specific hydrolase that catalyzes the internal cleavage of MMP. Is able to hydrolyze purified MMP into distinct lower order oligomannosides but does not cleave acylated or deacylated forms of 6-O-methylglucose lipopolysaccharide (MGLP), beta-mannans, synthetic 4alpha-oligomannosides or its own reaction products. Products were identified as four distinct oligomannosides differing in the number of mannose units (4 to 8) and methylation pattern (free or methylated C1-OH). Might serve as a recycling enzyme that hydrolyzes mature MMP into defined-size smaller oligomannosides that are, in turn, substrates for ManT and MeT1 activities for further processing into new daughter MMP chains. The protein is MMP endo-(1,4)-3-O-methyl-alpha-D-mannosidase of Mycolicibacterium hassiacum (strain DSM 44199 / CIP 105218 / JCM 12690 / 3849) (Mycobacterium hassiacum).